A 447-amino-acid polypeptide reads, in one-letter code: Adenylosuccinate synthetase (447 aa).

GTP is bound by residues Gly12–Lys18 and Gly40–Thr42. Asp13 (proton acceptor) is an active-site residue. Residues Asp13 and Gly40 each coordinate Mg(2+). IMP contacts are provided by residues Asp13–Lys16, Asn38–His41, Thr128, Arg142, Gln223, Thr238, and Arg302. His41 acts as the Proton donor in catalysis. Residue Thr298 to Arg304 coordinates substrate. GTP contacts are provided by residues Arg304, Lys330–Asp332, and Ser412–Gly414.

This sequence belongs to the adenylosuccinate synthetase family. In terms of assembly, homodimer. Mg(2+) serves as cofactor.

The protein localises to the cytoplasm. It catalyses the reaction IMP + L-aspartate + GTP = N(6)-(1,2-dicarboxyethyl)-AMP + GDP + phosphate + 2 H(+). It participates in purine metabolism; AMP biosynthesis via de novo pathway; AMP from IMP: step 1/2. In terms of biological role, plays an important role in the de novo pathway of purine nucleotide biosynthesis. Catalyzes the first committed step in the biosynthesis of AMP from IMP. In Nostoc punctiforme (strain ATCC 29133 / PCC 73102), this protein is Adenylosuccinate synthetase.